We begin with the raw amino-acid sequence, 1160 residues long: MSEPRFVHLRVHSDYSMIDGLAKTAPLVKKAAALGMPALAITDFTNLCGLVKFYGAGHGAGIKPIVGADFNVQCDLLGDELTHLTVLAANNTGYQNLTLLISKAYQRGYGAAGPIIDRDWLIELNEGLILLSGGRMGDVGRSLLRGNSALVDECVAFYEEHFPDRYFLELIRTGRPDEESYLHAAVELAEARGLPVVATNDVRFIDSSDFDAHEIRVAIHDGFTLDDPKRPRNYSPQQYMRSEEEMCELFADIPEALANTVEIAKRCNVTVRLGEYFLPQFPTGDMSTEDYLVKRAKEGLEERLAFLFPDEEERVKRRPEYDERLETELQVINQMGFPGYFLIVMEFIQWSKDNGVPVGPGRGSGAGSLVAYALKITDLDPLEFDLLFERFLNPERVSMPDFDVDFCMEKRDQVIEHVADMYGRDAVSQIITFGTMAAKAVIRDVGRVLGHPYGFVDRISKLIPPDPGMTLAKAFEAEPQLPEIYEADEEVKALIDMARKLEGVTRNAGKHAGGVVIAPTKITDFAPLYCDEEGKHPVTQFDKSDVEYAGLVKFDFLGLRTLTIINWALEMINKRRAKNGEPPLDIAAIPLDDKKSFDMLQRSETTAVFQLESRGMKDLIKRLQPDCFEDMIALVALFRPGPLQSGMVDNFIDRKHGREEISYPDVQWQHESLKPVLEPTYGIILYQEQVMQIAQVLSGYTLGGADMLRRAMGKKKPEEMAKQRSVFAEGAEKNGINAELAMKIFDLVEKFAGYGFNKSHSAAYALVSYQTLWLKAHYPAEFMAAVMTADMDNTEKVVGLVDECWRMGLKILPPDINSGLYHFHVNDDGEIVYGIGAIKGVGEGPIEAIIEARNKGGYFRELFDLCARTDTKKLNRRVLEKLIMSGAFDRLGPHRAALMNSLGDALKAADQHAKAEAIGQADMFGVLAEEPEQIEQSYASCQPWPEQVVLDGERETLGLYLTGHPINQYLKEIERYVGGVRLKDMHPTERGKVITAAGLVVAARVMVTKRGNRIGICTLDDRSGRLEVMLFTDALDKYQHLLEKDRILIVSGQVSFDDFSGGLKMTAREVMDIDEAREKYARGLAISLTDRQIDDQLLNRLRQSLEPHRSGTIPVHLYYQRADARARLRFGATWRVSPSDRLLNDLRGLIGSEQVELEFD.

The protein belongs to the DNA polymerase type-C family. DnaE subfamily. As to quaternary structure, the DNA polymerase holoenzyme is a complex that contains 10 different types of subunits. These subunits are organized into 3 functionally essential subassemblies: the pol III core, the beta sliding clamp processivity factor and the clamp-loading complex. The pol III core (subunits alpha,epsilon and theta) contains the polymerase and the 3'-5' exonuclease proofreading activities. The polymerase is tethered to the template via the sliding clamp processivity factor. The clamp-loading complex assembles the beta processivity factor onto the primer template and plays a central role in the organization and communication at the replication fork. This complex contains delta, delta', psi and chi, and copies of either or both of two different DnaX proteins, gamma and tau. The composition of the holoenzyme is, therefore: (alpha,epsilon,theta)[2]-(gamma/tau)[3]-delta,delta', psi,chi-beta[4].

Its subcellular location is the cytoplasm. It carries out the reaction DNA(n) + a 2'-deoxyribonucleoside 5'-triphosphate = DNA(n+1) + diphosphate. Functionally, DNA polymerase III is a complex, multichain enzyme responsible for most of the replicative synthesis in bacteria. This DNA polymerase also exhibits 3' to 5' exonuclease activity. The alpha chain is the DNA polymerase. The protein is DNA polymerase III subunit alpha (dnaE) of Escherichia coli O157:H7.